A 618-amino-acid chain; its full sequence is Sulfite reductase [NADPH] flavoprotein alpha-component (618 aa).

One can recognise a Flavodoxin-like domain in the interval 64 to 202; that stretch reads VTLISASQTG…QAQQWRQQVV (139 aa). Residues 70 to 75, 117 to 120, and 153 to 162 each bind FMN; these read SQTGNA, STQG, and LGDTSYEHFC. Residues 253–467 enclose the FAD-binding FR-type domain; it reads TAPLTAQLSV…IEHNDNFRLP (215 aa). FAD-binding positions include Thr-341, Lys-375, 405–408, 423–425, Tyr-429, and 438–441; these read RLYS, TVG, and GGAS. NADP(+) is bound by residues 538 to 539, 544 to 548, and Asp-580; these read SR and KIYVQ. Tyr-618 is a binding site for FAD.

This sequence belongs to the NADPH-dependent sulphite reductase flavoprotein subunit CysJ family. It in the N-terminal section; belongs to the flavodoxin family. In the C-terminal section; belongs to the flavoprotein pyridine nucleotide cytochrome reductase family. In terms of assembly, alpha(8)-beta(8). The alpha component is a flavoprotein, the beta component is a hemoprotein. FAD is required as a cofactor. It depends on FMN as a cofactor.

The catalysed reaction is hydrogen sulfide + 3 NADP(+) + 3 H2O = sulfite + 3 NADPH + 4 H(+). It participates in sulfur metabolism; hydrogen sulfide biosynthesis; hydrogen sulfide from sulfite (NADPH route): step 1/1. Its function is as follows. Component of the sulfite reductase complex that catalyzes the 6-electron reduction of sulfite to sulfide. This is one of several activities required for the biosynthesis of L-cysteine from sulfate. The flavoprotein component catalyzes the electron flow from NADPH -&gt; FAD -&gt; FMN to the hemoprotein component. This Yersinia pseudotuberculosis serotype I (strain IP32953) protein is Sulfite reductase [NADPH] flavoprotein alpha-component.